Reading from the N-terminus, the 54-residue chain is UPF0391 membrane protein Sde_0270 (54 aa).

A run of 2 helical transmembrane segments spans residues 6-26 and 29-49; these read IVFL…IAGV and GIAK…LVIG.

It belongs to the UPF0391 family.

Its subcellular location is the cell membrane. In Saccharophagus degradans (strain 2-40 / ATCC 43961 / DSM 17024), this protein is UPF0391 membrane protein Sde_0270.